The chain runs to 333 residues: Gramillins biosynthetic cluster protein FGSG_00039 (333 aa).

It functions in the pathway mycotoxin biosynthesis. Functionally, part of the gene cluster that mediates the biosynthesis of gramillins A and B, bicyclic lipopeptides that induce cell death in maize leaves but not in wheat leaves. The nonribosomal peptide synthetase GRA1 incorporates respectively a glutamic adic (Glu), a leucine (Leu), a serine (Ser), a hydroxyglutamine (HOGln), a 2-amino decanoic acid, and 2 cysteins (CysB and CysA). The biosynthesis of 2-amino decanoic acid incorporated in gramillins could be initiated by a fatty acid synthase composed of the alpha and beta subunits FGSG_00036 and FGSG_11656. The cytochrome P450 monooxygenase FGSG_15680 could hydroxylate the fatty acid chain. Subsequent oxidation to the ketone by the oxidoreductase FGSG_00048 and transamination by aminotransferase FGSG_00049 could form 2-amino-decanoic acid. On the other hand, FGSG_15680 could also be responsible for the HO-modified glutamine at the gamma-position. Whether hydroxylation occurs on the fully assembled product or on the Gln residue prior to assembly into the gramillins requires further proof. The thioredoxin FGSG_00043 could also be required for the disulfide-bond formation between CysA and CysB. The specific involvement of the remaining proteins from the cluster is more difficult to discern, but could have broader regulatory (FGSG_00040 and FGSG_11657) or enzymatic functions (FGSG_00044 and FGSG_00045). The final C-domain of GRA1 does not possess the expected sequence of a termination CT domain, often implicated in macrocyclization and release of a cyclopeptidein fungal NRPs; and the thioesterase FGSG_00047 may act in concert with the terminal C-domain of GRA1 to catalyze the formation of the macrocyclic anhydride and release of the products. In Gibberella zeae (strain ATCC MYA-4620 / CBS 123657 / FGSC 9075 / NRRL 31084 / PH-1) (Wheat head blight fungus), this protein is Gramillins biosynthetic cluster protein FGSG_00039.